The chain runs to 444 residues: Protein kinase C and casein kinase substrate in neurons protein 1 (444 aa).

A phosphoserine mark is found at Ser-2 and Ser-79. The region spanning 13–283 is the F-BAR domain; the sequence is EETTDSFWEV…AIRGADAQDD (271 aa). A coiled-coil region spans residues 26-275; the sequence is KRTVKRIDDG…QVYRELEQAI (250 aa). Position 184 is a phosphothreonine (Thr-184). The tract at residues 313-384 is disordered; sequence AAKKEKQPKK…NGGSNPFDED (72 aa). A compositionally biased stretch (basic and acidic residues) spans 314 to 324; the sequence is AKKEKQPKKAE. The span at 336-358 shows a compositional bias: polar residues; that stretch reads ESTSQAGDRGSVSSYDRGQTYAT. A phosphoserine mark is found at Ser-346, Ser-348, Ser-349, Ser-361, and Ser-365. Positions 385-444 constitute an SH3 domain; sequence AKGVRVRALYDYDGQEQDELSFKAGDELTKLGEEDEQGWCRGRLDSGQLGLYPANYVEVV. Tyr-394 bears the Phosphotyrosine mark. Phosphoserine is present on residues Ser-405 and Ser-430.

Belongs to the PACSIN family. In terms of assembly, homodimer. May form heterooligomers with other PACSINs. Interacts with MAPT. Interacts (via SH3 domain) with SYNJ1 and WASL. Interacts (via SH3 domain) with DNM1; the interaction is reduced by DNM1 phosphorylation. Interacts with DNM2 and DNM3. Interacts with both COBL and DBNL. Identified in a complex composed of COBL, PACSIN1 and WASL. Interacts with EHD1 and EHD3. Interacts with TRPV4. In terms of processing, phosphorylated by casein kinase 2 (CK2) and protein kinase C (PKC).

It localises to the cytoplasm. Its subcellular location is the cell projection. The protein localises to the synapse. The protein resides in the synaptosome. It is found in the ruffle membrane. It localises to the membrane. Its subcellular location is the cytoplasmic vesicle membrane. The protein localises to the cytosol. The protein resides in the cell membrane. Its function is as follows. Binds to membranes via its F-BAR domain and mediates membrane tubulation. Plays a role in the reorganization of the microtubule cytoskeleton via its interaction with MAPT; this decreases microtubule stability and inhibits MAPT-induced microtubule polymerization. Plays a role in cellular transport processes by recruiting DNM1, DNM2 and DNM3 to membranes. Plays a role in the reorganization of the actin cytoskeleton and in neuron morphogenesis via its interaction with COBL and WASL, and by recruiting COBL to the cell cortex. Plays a role in the regulation of neurite formation, neurite branching and the regulation of neurite length. Required for normal synaptic vesicle endocytosis; this process retrieves previously released neurotransmitters to accommodate multiple cycles of neurotransmission. Required for normal excitatory and inhibitory synaptic transmission. The sequence is that of Protein kinase C and casein kinase substrate in neurons protein 1 (PACSIN1) from Bos taurus (Bovine).